The sequence spans 208 residues: MEKGLLIVISGPSGTGKGTVCKELLRNNNFWFSVSSTTRDPREGEIQGKSYYFMSKEEFEDKIKENDFLEYAKVYGNYYGTPKSKVIEMLDKGKDVILEIDIQGALQVKENYKEGIFIFILPPSMEELKNRIIKRGTETEESLMTRFKSAYKEINYVSKYNYAVVNDKVHDAVEKIQSIISAEKCRVDRIKDSILLSKEGIIHEQLYD.

Residues 4–181 form the Guanylate kinase-like domain; it reads GLLIVISGPS…AVEKIQSIIS (178 aa). Position 11 to 18 (11 to 18) interacts with ATP; it reads GPSGTGKG.

It belongs to the guanylate kinase family.

It is found in the cytoplasm. The enzyme catalyses GMP + ATP = GDP + ADP. Functionally, essential for recycling GMP and indirectly, cGMP. The protein is Guanylate kinase of Clostridium tetani (strain Massachusetts / E88).